Consider the following 587-residue polypeptide: Aspartate--tRNA ligase (587 aa).

E174 serves as a coordination point for L-aspartate. Positions 198 to 201 (QITK) are aspartate. Position 220 (R220) interacts with L-aspartate. ATP contacts are provided by residues 220 to 222 (RDE) and Q229. Residue H443 participates in L-aspartate binding. An ATP-binding site is contributed by E477. R484 lines the L-aspartate pocket. Position 529-532 (529-532 (GLDR)) interacts with ATP.

This sequence belongs to the class-II aminoacyl-tRNA synthetase family. Type 1 subfamily. In terms of assembly, homodimer.

Its subcellular location is the cytoplasm. The enzyme catalyses tRNA(Asp) + L-aspartate + ATP = L-aspartyl-tRNA(Asp) + AMP + diphosphate. In terms of biological role, catalyzes the attachment of L-aspartate to tRNA(Asp) in a two-step reaction: L-aspartate is first activated by ATP to form Asp-AMP and then transferred to the acceptor end of tRNA(Asp). In Streptococcus pneumoniae serotype 4 (strain ATCC BAA-334 / TIGR4), this protein is Aspartate--tRNA ligase.